We begin with the raw amino-acid sequence, 139 residues long: Small ribosomal subunit protein uS12 (139 aa).

A disordered region spans residues 118–139 (AGVANRNQSRSRYGTKKPKPKS). Residues 130 to 139 (YGTKKPKPKS) show a composition bias toward basic residues.

The protein belongs to the universal ribosomal protein uS12 family. As to quaternary structure, part of the 30S ribosomal subunit. Contacts proteins S8 and S17. May interact with IF1 in the 30S initiation complex.

Functionally, with S4 and S5 plays an important role in translational accuracy. Its function is as follows. Interacts with and stabilizes bases of the 16S rRNA that are involved in tRNA selection in the A site and with the mRNA backbone. Located at the interface of the 30S and 50S subunits, it traverses the body of the 30S subunit contacting proteins on the other side and probably holding the rRNA structure together. The combined cluster of proteins S8, S12 and S17 appears to hold together the shoulder and platform of the 30S subunit. This is Small ribosomal subunit protein uS12 from Mycoplasma mobile (strain ATCC 43663 / 163K / NCTC 11711) (Mesomycoplasma mobile).